We begin with the raw amino-acid sequence, 255 residues long: Acetylglutamate kinase (255 aa).

Substrate is bound by residues 40 to 41 (GG), arginine 62, and asparagine 153.

It belongs to the acetylglutamate kinase family. ArgB subfamily.

Its subcellular location is the cytoplasm. It carries out the reaction N-acetyl-L-glutamate + ATP = N-acetyl-L-glutamyl 5-phosphate + ADP. Its pathway is amino-acid biosynthesis; L-arginine biosynthesis; N(2)-acetyl-L-ornithine from L-glutamate: step 2/4. In terms of biological role, catalyzes the ATP-dependent phosphorylation of N-acetyl-L-glutamate. The chain is Acetylglutamate kinase from Bacillus anthracis (strain A0248).